The sequence spans 167 residues: MDKFSELGSIAWLWTNSELHQNWPLSLFSTNVIPAIETQQYVLLVRDGMPIAYCSWARLNLETEVKYINDVTSLKLEDWQSGDRYWFIDWIAPFGDSYLLTKHMRKLFSDGLFRAIRVDAGSPNGKISEFYGRNVDAKLAMQSFEQYQKELMNALSQQDNFIISTSK.

Catalysis depends on residues H20 and D89.

It belongs to the RTX toxin acyltransferase family.

It is found in the cytoplasm. It catalyses the reaction tetradecanoyl-[ACP] + L-lysyl-[protein] = N(6)-tetradecanoyl-L-lysyl-[protein] + holo-[ACP] + H(+). Functionally, protein-lysine myristoyltransferase that catalyzes myristoylation of the protoxin (RtxA) at two internal lysine residues, thereby converting it to the active toxin. The sequence is that of Protein-lysine myristoyltransferase RtxC from Kingella kingae.